The primary structure comprises 58 residues: Small ribosomal subunit protein bS21 (58 aa).

Residues 32–42 (ARRREHYEKPS) are compositionally biased toward basic and acidic residues. The tract at residues 32 to 58 (ARRREHYEKPSVRRKKKSEAARKRRWH) is disordered. Residues 43–58 (VRRKKKSEAARKRRWH) are compositionally biased toward basic residues.

This sequence belongs to the bacterial ribosomal protein bS21 family.

The protein is Small ribosomal subunit protein bS21 of Moorella thermoacetica (strain ATCC 39073 / JCM 9320).